The sequence spans 103 residues: Large ribosomal subunit protein uL23 (103 aa).

Belongs to the universal ribosomal protein uL23 family. As to quaternary structure, part of the 50S ribosomal subunit. Contacts protein L29, and trigger factor when it is bound to the ribosome.

Its function is as follows. One of the early assembly proteins it binds 23S rRNA. One of the proteins that surrounds the polypeptide exit tunnel on the outside of the ribosome. Forms the main docking site for trigger factor binding to the ribosome. This Prochlorococcus marinus (strain NATL1A) protein is Large ribosomal subunit protein uL23.